The sequence spans 459 residues: Magnesium transporter MRS2-11, chloroplastic (459 aa).

A chloroplast-targeting transit peptide spans 1-62; it reads MALTPIPSTF…EALKVLSRSK (62 aa). The tract at residues 76–122 is disordered; that stretch reads GDYESLNVSDDDDGSDSNSSDGDNGGGRDDSKKIDSSSSSSSSDSTS. A compositionally biased stretch (basic and acidic residues) spans 101–110; it reads GGRDDSKKID. Residues 111–122 show a composition bias toward low complexity; that stretch reads SSSSSSSSDSTS. Transmembrane regions (helical) follow at residues 397 to 417 and 430 to 450; these read LLLQVGTFCVAVGALIAGIFG and AFWLTTGGIIIGAAVAFFLMY. Positions 417–419 match the Required for magnesium transport activity motif; it reads GMN.

It belongs to the CorA metal ion transporter (MIT) (TC 1.A.35.5) family. In terms of tissue distribution, expressed in the green part of the plant. Preferentially expressed in the spongy mesophyll cells and stomata of young leaves but also detected in cotyledons and at the base of the leaf petioles.

The protein resides in the plastid. The protein localises to the chloroplast membrane. High-affinity magnesium transporter that mediates the influx of magnesium in chloroplast. The polypeptide is Magnesium transporter MRS2-11, chloroplastic (MRS2-11) (Arabidopsis thaliana (Mouse-ear cress)).